The primary structure comprises 190 residues: DNA dC-&gt;dU-editing enzyme APOBEC-3C (190 aa).

The CMP/dCMP-type deaminase domain occupies Asp29–Leu138. Residues Glu40–Tyr86 are (Microbial infection) Required for interaction with human foamy virus protein Bet. His66 is a Zn(2+) binding site. Glu68 (proton donor) is an active-site residue. Zn(2+) is bound by residues Cys97 and Cys100.

It belongs to the cytidine and deoxycytidylate deaminase family. In terms of assembly, homodimer. Interacts with TRIB3. Interacts with AGO2. (Microbial infection) Interacts with human foamy virus protein Bet; this interaction does not induce APOBEC3C degradation but prevents its dimerization and incorporation into the virion by binding of Bet close to or within the APOBEC3C dimerization site. As to quaternary structure, (Microbial infection) Interacts with HIV-1 Vif. Requires Zn(2+) as cofactor. Expressed in spleen, testes, peripherical blood lymphocytes, heart, thymus, prostate and ovary.

It localises to the nucleus. The protein resides in the cytoplasm. The enzyme catalyses a 2'-deoxycytidine in single-stranded DNA + H2O + H(+) = a 2'-deoxyuridine in single-stranded DNA + NH4(+). Its activity is regulated as follows. (Microbial infection) Antiviral activity is neutralized by the HIV-1 virion infectivity factor (Vif), that prevents its incorporation into progeny HIV-1 virions by both inhibiting its translation and/or by inducing its ubiquitination and subsequent degradation by the 26S proteasome. Functionally, DNA deaminase (cytidine deaminase) which acts as an inhibitor of retrovirus replication and retrotransposon mobility via deaminase-dependent and -independent mechanisms. After the penetration of retroviral nucleocapsids into target cells of infection and the initiation of reverse transcription, it can induce the conversion of cytosine to uracil in the minus-sense single-strand viral DNA, leading to G-to-A hypermutations in the subsequent plus-strand viral DNA. The resultant detrimental levels of mutations in the proviral genome, along with a deamination-independent mechanism that works prior to the proviral integration, together exert efficient antiretroviral effects in infected target cells. Selectively targets single-stranded DNA and does not deaminate double-stranded DNA or single- or double-stranded RNA. Exhibits antiviral activity against simian immunodeficiency virus (SIV), hepatitis B virus (HBV), herpes simplex virus 1 (HHV-1) and Epstein-Barr virus (EBV) and may inhibit the mobility of LTR and non-LTR retrotransposons. May also play a role in the epigenetic regulation of gene expression through the process of active DNA demethylation. The polypeptide is DNA dC-&gt;dU-editing enzyme APOBEC-3C (APOBEC3C) (Homo sapiens (Human)).